Here is a 156-residue protein sequence, read N- to C-terminus: SCP2 sterol-binding domain-containing protein 1 (156 aa).

The SCP2 domain occupies 44 to 156 (TVPVFEDISQ…ERVFKDWAKW (113 aa)).

The chain is SCP2 sterol-binding domain-containing protein 1 (SCP2D1) from Bos taurus (Bovine).